The chain runs to 487 residues: MSFRDDNEEARNDLRRPFIHTGSWYRMGSRQSSMMGSSQVIRDSSISVLACVLIVALGPIQFGFTCGYSSPTQAAITKDLGLTVSEYSVFGSLSNVGAMVGAIASGQIAEYIGRKGSLMIAAIPNIIGWLCISFAKDTSFLYMGRLLEGFGVGIISYTVPVYIAEIAPQNMRGGLGSVNQLSVTIGIMLAYLLGLFVPWRILAVLGILPCTLLIPGLFFIPESPRWLAKMGMTDEFETSLQVLRGFETDITVEVNEIKRSVASSTKRNTVRFVDLKRRRYYFPLMVGIGLLVLQQLGGINGVLFYSSTIFESAGVTSSNAATFGVGAIQVVATAISTWLVDKAGRRLLLTISSVGMTISLVIVAAAFYLKEFVSPDSDMYSWLSILSVVGVVAMVVFFSLGMGPIPWLIMSEILPVNIKGLAGSIATLANWFFSWLITMTANLLLAWSSGGTFTLYGLVCAFTVVFVTLWVPETKGKTLEELQSLFR.

S2 carries the post-translational modification N-acetylserine. 12 consecutive transmembrane segments (helical) span residues 46 to 66, 89 to 109, 115 to 135, 146 to 166, 178 to 198, 201 to 221, 284 to 304, 320 to 340, 347 to 367, 389 to 409, 425 to 445, and 451 to 471; these read ISVL…GFTC, VFGS…GQIA, KGSL…ISFA, LLEG…IAEI, VNQL…LFVP, ILAV…FFIP, LMVG…GVLF, AATF…TWLV, LLLT…AAAF, VGVV…PWLI, IATL…NLLL, and GTFT…TLWV.

The protein belongs to the major facilitator superfamily. Sugar transporter (TC 2.A.1.1) family.

The protein resides in the membrane. In terms of biological role, sugar transporter. This Arabidopsis thaliana (Mouse-ear cress) protein is Sugar transporter ERD6-like 6.